The primary structure comprises 250 residues: Phosphoribosylaminoimidazole-succinocarboxamide synthase (250 aa).

Belongs to the SAICAR synthetase family.

The catalysed reaction is 5-amino-1-(5-phospho-D-ribosyl)imidazole-4-carboxylate + L-aspartate + ATP = (2S)-2-[5-amino-1-(5-phospho-beta-D-ribosyl)imidazole-4-carboxamido]succinate + ADP + phosphate + 2 H(+). Its pathway is purine metabolism; IMP biosynthesis via de novo pathway; 5-amino-1-(5-phospho-D-ribosyl)imidazole-4-carboxamide from 5-amino-1-(5-phospho-D-ribosyl)imidazole-4-carboxylate: step 1/2. This Picosynechococcus sp. (strain ATCC 27264 / PCC 7002 / PR-6) (Agmenellum quadruplicatum) protein is Phosphoribosylaminoimidazole-succinocarboxamide synthase.